A 113-amino-acid polypeptide reads, in one-letter code: Hydrogenase maturation factor HypA (113 aa).

His-2 contacts Ni(2+). Residues Cys-73, Cys-76, Cys-89, and Cys-92 each contribute to the Zn(2+) site.

The protein belongs to the HypA/HybF family.

Its function is as follows. Involved in the maturation of [NiFe] hydrogenases. Required for nickel insertion into the metal center of the hydrogenase. The protein is Hydrogenase maturation factor HypA of Rhizobium leguminosarum bv. viciae.